The chain runs to 783 residues: DNA repair and recombination protein RAD54-like (783 aa).

A required for chromatin remodeling, strand pairing activities and coupling of ATPase activity region spans residues arginine 2–glutamine 9. Threonine 22 bears the Phosphothreonine mark. A Helicase ATP-binding domain is found at glutamate 165–glutamate 340. Aspartate 178–threonine 185 is an ATP binding site. The short motif at aspartate 291–histidine 294 is the DEGH box element. The region spanning leucine 497–threonine 654 is the Helicase C-terminal domain. The interval alanine 737–phenylalanine 783 is disordered. Over residues aspartate 765 to alanine 776 the composition is skewed to acidic residues.

The protein belongs to the SNF2/RAD54 helicase family. As to quaternary structure, interacts (via N-terminus) with spn-A/Rad51.

The protein localises to the nucleus. Its function is as follows. Involved in mitotic DNA repair and meiotic recombination. Functions in the recombinational DNA repair pathway. Essential for interhomolog gene conversion (GC), but may have a less important role in intersister GC than spn-A/Rad51. In the presence of DNA, spn-A/Rad51 enhances the ATPase activity of okr/Rad54. The chain is DNA repair and recombination protein RAD54-like from Drosophila mojavensis (Fruit fly).